A 501-amino-acid polypeptide reads, in one-letter code: Aldehyde dehydrogenase, cytosolic 1 (501 aa).

Gly-246 to Gly-251 is a binding site for NAD(+). Residue Glu-269 is the Proton acceptor of the active site. Cys-303 (nucleophile) is an active-site residue.

It belongs to the aldehyde dehydrogenase family. As to quaternary structure, homotetramer. In terms of tissue distribution, eye specific, with very high expression in the lens.

Its subcellular location is the cytoplasm. It carries out the reaction an aldehyde + NAD(+) + H2O = a carboxylate + NADH + 2 H(+). It participates in alcohol metabolism; ethanol degradation; acetate from ethanol: step 2/2. Its function is as follows. Major component of the eye of elephant shrews, which in contrast to other mammals, possesses both a lens- and a non-lens class-1 aldehyde dehydrogenase 1. This eye-specific form is a structural protein of the lens and, in other part of the eye, serves as the major form of ALDH1. Can convert/oxidize retinaldehyde to retinoic acid. This is Aldehyde dehydrogenase, cytosolic 1 (ALDH1) from Elephantulus edwardii (Cape long-eared elephant shrew).